Consider the following 128-residue polypeptide: Aspartate 1-decarboxylase (128 aa).

The active-site Schiff-base intermediate with substrate; via pyruvic acid is serine 25. Serine 25 carries the post-translational modification Pyruvic acid (Ser). Residue threonine 57 coordinates substrate. Tyrosine 58 (proton donor) is an active-site residue. Substrate is bound at residue 73 to 75; the sequence is GSA.

The protein belongs to the PanD family. Heterooctamer of four alpha and four beta subunits. Pyruvate is required as a cofactor. Post-translationally, is synthesized initially as an inactive proenzyme, which is activated by self-cleavage at a specific serine bond to produce a beta-subunit with a hydroxyl group at its C-terminus and an alpha-subunit with a pyruvoyl group at its N-terminus.

The protein resides in the cytoplasm. The enzyme catalyses L-aspartate + H(+) = beta-alanine + CO2. It functions in the pathway cofactor biosynthesis; (R)-pantothenate biosynthesis; beta-alanine from L-aspartate: step 1/1. Catalyzes the pyruvoyl-dependent decarboxylation of aspartate to produce beta-alanine. The sequence is that of Aspartate 1-decarboxylase from Paraburkholderia phytofirmans (strain DSM 17436 / LMG 22146 / PsJN) (Burkholderia phytofirmans).